The following is a 444-amino-acid chain: MGKGGNQGEGAAEREVPMPTFSWEEIQKHNLRTDRWLVIDRKVYNITKWSTQHPGGQRVIGHYAGEDATDAFRAFHPDLKFVGKFLKPLLIGELAPEEPSQDHGKNSKIIEDFRALKKTAEDMNLFKTNHVFFLLLLAHIIALESIAWFTVFYFGNGWIPTLITAFVLATSQAQAGWLQHDYGHLSVYRKPKWNHLVHKFVIGHLKGASANWWNHRHFQHHAKPNIFHKDPDVNMLHVFVLGEWQPIEYGKKKLKYLPYNHQHEYFFLIGPPLLIPMYFQYQIIMTMIVHKNWVDLAWAISYYIRFFVTYIPFYGILGALLFLNFIRFLESHWFVWVTQMNHIVMEIDQEAYRDWFSSQLTATCNVEQSFFNDWFSGHLNFQIEHHLFPTMPRHNLHKIAPLVKSLCAKHGIEYQEKPLLRALLDIIRSLRKSGKLWLDAYLHK.

Topologically, residues methionine 1 to valine 131 are cytoplasmic. The 78-residue stretch at methionine 18–alanine 95 folds into the Cytochrome b5 heme-binding domain. A helical membrane pass occupies residues phenylalanine 132–phenylalanine 152. Topologically, residues tyrosine 153 to glycine 157 are lumenal. Residues tryptophan 158–leucine 178 traverse the membrane as a helical segment. Over glutamine 179 to glutamate 264 the chain is Cytoplasmic. The short motif at histidine 180–histidine 184 is the Histidine box-1 element. Positions histidine 217–histidine 221 match the Histidine box-2 motif. Residues tyrosine 265–methionine 285 form a helical membrane-spanning segment. At threonine 286 to arginine 305 the chain is on the lumenal side. A helical transmembrane segment spans residues phenylalanine 306–isoleucine 326. At arginine 327 to lysine 444 the chain is on the cytoplasmic side. The Histidine box-3 signature appears at glutamine 382–histidine 386.

Belongs to the fatty acid desaturase type 1 family.

The protein resides in the endoplasmic reticulum membrane. It catalyses the reaction (9Z,12Z)-octadecadienoyl-CoA + 2 Fe(II)-[cytochrome b5] + O2 + 2 H(+) = (6Z,9Z,12Z)-octadecatrienoyl-CoA + 2 Fe(III)-[cytochrome b5] + 2 H2O. It carries out the reaction (9Z,12Z,15Z)-octadecatrienoyl-CoA + 2 Fe(II)-[cytochrome b5] + O2 + 2 H(+) = (6Z,9Z,12Z,15Z)-octadecatetraenoyl-CoA + 2 Fe(III)-[cytochrome b5] + 2 H2O. The catalysed reaction is (9Z,12Z,15Z,18Z,21Z)-tetracosapentaenoyl-CoA + 2 Fe(II)-[cytochrome b5] + O2 + 2 H(+) = (6Z,9Z,12Z,15Z,18Z,21Z)-tetracosahexaenoyl-CoA + 2 Fe(III)-[cytochrome b5] + 2 H2O. The enzyme catalyses (11E)-octadecenoyl-CoA + 2 Fe(II)-[cytochrome b5] + O2 + 2 H(+) = (6Z,11E)-octadecadienoyl-CoA + 2 Fe(III)-[cytochrome b5] + 2 H2O. It catalyses the reaction (11Z,14Z)-eicosadienoyl-CoA + 2 Fe(II)-[cytochrome b5] + O2 + 2 H(+) = (8Z,11Z,14Z)-eicosatrienoyl-CoA + 2 Fe(III)-[cytochrome b5] + 2 H2O. It carries out the reaction (11Z,14Z,17Z)-eicosatrienoyl-CoA + 2 Fe(II)-[cytochrome b5] + O2 + 2 H(+) = (8Z,11Z,14Z,17Z)-eicosatetraenoyl-CoA + 2 Fe(III)-[cytochrome b5] + 2 H2O. Its pathway is lipid metabolism; polyunsaturated fatty acid biosynthesis. Its function is as follows. Involved in the biosynthesis of highly unsaturated fatty acids (HUFA) from the essential polyunsaturated fatty acids (PUFA) linoleic acid (LA) (18:2n-6) and alpha-linolenic acid (ALA) (18:3n-3) precursors, acting as a fatty acyl-coenzyme A (CoA) desaturase that introduces a cis double bond at carbon 6 of the fatty acyl chain. Catalyzes the first and rate limiting step in this pathway which is the desaturation of LA (18:2n-6) and ALA (18:3n-3) into gamma-linoleate (GLA) (18:3n-6) and stearidonate (18:4n-3), respectively. Subsequently, in the biosynthetic pathway of HUFA n-3 series, it desaturates tetracosapentaenoate (24:5n-3) to tetracosahexaenoate (24:6n-3), which is then converted to docosahexaenoate (DHA)(22:6n-3), an important lipid for nervous system function. It can also desaturate (11E)-octadecenoate (trans-vaccenoate) at carbon 6 generating (6Z,11E)-octadecadienoate. In addition to Delta-6 activity, this enzyme exhibits Delta-8 activity with slight biases toward n-3 fatty acyl-CoA substrates. This chain is Acyl-CoA 6-desaturase (FADS2), found in Macaca fascicularis (Crab-eating macaque).